The following is a 676-amino-acid chain: Envelope glycoprotein (676 aa).

The first 32 residues, 1–32 (MGVTGILQLPRDRFKRTSFFLWVIILFQRTFS), serve as a signal peptide directing secretion. The Extracellular portion of the chain corresponds to 33–650 (IPLGVIHNST…NDNWWTGWRQ (618 aa)). An N-linked (GlcNAc...) asparagine; by host glycan is attached at asparagine 40. Cystine bridges form between cysteine 53–cysteine 609, cysteine 108–cysteine 135, cysteine 121–cysteine 147, cysteine 511–cysteine 556, and cysteine 601–cysteine 608. Residues 54-201 (RDKLSSTNQL…DFFSSHPLRE (148 aa)) form a receptor-binding region. 11 N-linked (GlcNAc...) asparagine; by host glycosylation sites follow: asparagine 204, asparagine 228, asparagine 238, asparagine 257, asparagine 268, asparagine 296, asparagine 317, asparagine 333, asparagine 346, asparagine 386, and asparagine 413. The tract at residues 305 to 485 (ELSFTAVSNR…SGKLGLITNT (181 aa)) is mucin-like region. The span at 314–335 (RAKNISGQSPARTSSDPGTNTT) shows a compositional bias: polar residues. Residues 314–337 (RAKNISGQSPARTSSDPGTNTTTE) are disordered. Positions 370 to 478 (TISTSPQPPT…TGEESASSGK (109 aa)) are disordered. Over residues 414-427 (DSTASDTPPATTAA) the composition is skewed to low complexity. 3 N-linked (GlcNAc...) asparagine; by host glycosylation sites follow: asparagine 436, asparagine 454, and asparagine 462. Over residues 447 to 464 (ATTTSPQNHSETAGNNNT) the composition is skewed to polar residues. Residues 524–539 (GAAIGLAWIPYFGPAA) are fusion peptide. The stretch at 554-595 (LICGLRQLANETTQALQLFLRATTELRTFSILNRKAIDFLLQ) forms a coiled coil. Asparagine 563 carries N-linked (GlcNAc...) asparagine; by host glycosylation. The stretch at 615–634 (WTKNITDKIDQIIHDFVDKT) forms a coiled coil. Asparagine 618 is a glycosylation site (N-linked (GlcNAc...) asparagine; by host). Residues 651–671 (WIPAGIGVTGVIIAVIALFCI) traverse the membrane as a helical segment. 2 S-palmitoyl cysteine; by host lipidation sites follow: cysteine 670 and cysteine 672. The Cytoplasmic portion of the chain corresponds to 672 to 676 (CKFVF).

It belongs to the filoviruses glycoprotein family. As to quaternary structure, homotrimer; each monomer consists of a GP1 and a GP2 subunit linked by disulfide bonds. The resulting peplomers (GP1,2) protrude from the virus surface as spikes. Interacts with host integrin alpha-V/ITGAV. Interacts with host CLEC10A. Binds also to host CD209 and CLEC4M/DC-SIGN(R). Interacts with host FOLR1. Interacts with BST2; this interaction inhibits the antiviral effect of BST2 and this allows viral release from infected cells. Interacts with host FCN1; this interaction enhances viral entry. Interacts with host TLR4; this interaction induces cell death in T-lymphocytes or proinflammatory cytokines and SOCS1 production in monocytes. In terms of assembly, interacts with host entry receptor NPC1. GP1 and GP2delta are part of GP1,2delta soluble complexes released by ectodomain shedding. In terms of processing, the signal peptide region modulates GP's high mannose glycosylation, thereby determining the efficiency of the interactions with DC-SIGN(R). Post-translationally, N-glycosylated. O-glycosylated in the mucin-like region. In terms of processing, palmitoylation of GP2 is not required for its function. Post-translationally, specific enzymatic cleavages in vivo yield mature proteins. The precursor is processed into GP1 and GP2 by host cell furin in the trans Golgi, and maybe by other host proteases, to yield the mature GP1 and GP2 proteins. The cleavage site corresponds to the furin optimal cleavage sequence [KR]-X-[KR]-R. This cleavage does not seem to be required for function. After the internalization of the virus into cell endosomes, GP1 C-terminus is removed by the endosomal proteases cathepsin B, cathepsin L, or both, leaving a 19-kDa N-terminal fragment which is further digested by cathepsin B. Proteolytic processing of GP1,2 by host ADAM17 can remove the transmembrane anchor of GP2 and leads to shedding of complexes consisting in GP1 and truncated GP2 (GP1,2delta).

Its subcellular location is the virion membrane. It localises to the host cell membrane. It is found in the secreted. In terms of biological role, trimeric GP1,2 complexes form the virion surface spikes and mediate the viral entry processes, with GP1 acting as the receptor-binding subunit and GP2 as the membrane fusion subunit. At later times of infection, down-regulates the expression of various host cell surface molecules that are essential for immune surveillance and cell adhesion. Down-modulates several integrins including ITGA1, ITGA2, ITGA3, ITGA4, ITGA5, ITGA6, ITGAV and ITGB1. This decrease in cell adhesion molecules may lead to cell detachment, contributing to the disruption of blood vessel integrity and hemorrhages developed during infection (cytotoxicity). Interacts with host TLR4 and thereby stimulates the differentiation and activation of monocytes leading to bystander death of T-lymphocytes. Down-regulates as well the function of host natural killer cells. Counteracts the antiviral effect of host BST2/tetherin that restricts release of progeny virions from infected cells. However, cooperates with VP40 and host BST2 to activate canonical NF-kappa-B pathway in a manner dependent on neddylation. Functions as a decoy for anti-GP1,2 antibodies thereby contributing to viral immune evasion. Interacts and activates host macrophages and dendritic cells inducing up-regulation of cytokine transcription. This effect is mediated throught activation of host TLR4. Its function is as follows. Responsible for binding to the receptor(s) on target cells. Interacts with CD209/DC-SIGN and CLEC4M/DC-SIGNR which act as cofactors for virus entry into dendritic cells (DCs) and endothelial cells. Binding to the macrophage specific lectin CLEC10A also seems to enhance virus infectivity. Interaction with FOLR1/folate receptor alpha may be a cofactor for virus entry in some cell types, although results are contradictory. Members of the Tyro3 receptor tyrosine kinase family also seem to be cell entry factors in filovirus infection. Once attached, the virions are internalized through clathrin-dependent endocytosis and/or macropinocytosis. After internalization of the virus into the endosomes of the host cell, proteolysis of GP1 by two cysteine proteases, CTSB/cathepsin B and CTSL/cathepsin L removes the glycan cap and allows GP1 binding to the host entry receptor NPC1. NPC1-binding, Ca(2+) and acidic pH induce a conformational change of GP2, which unmasks its fusion peptide and permit membranes fusion. Functionally, acts as a class I viral fusion protein. Under the current model, the protein has at least 3 conformational states: pre-fusion native state, pre-hairpin intermediate state, and post-fusion hairpin state. During viral and target cell membrane fusion, the coiled coil regions (heptad repeats) assume a trimer-of-hairpins structure, positioning the fusion peptide in close proximity to the C-terminal region of the ectodomain. The formation of this structure appears to drive apposition and subsequent fusion of viral and target cell membranes. Responsible for penetration of the virus into the cell cytoplasm by mediating the fusion of the membrane of the endocytosed virus particle with the endosomal membrane. Low pH in endosomes induces an irreversible conformational change in GP2, releasing the fusion hydrophobic peptide. The protein is Envelope glycoprotein (GP) of Zaire ebolavirus (strain Kikwit-95) (ZEBOV).